We begin with the raw amino-acid sequence, 156 residues long: Small ribosomal subunit protein uS7 (156 aa).

This sequence belongs to the universal ribosomal protein uS7 family. As to quaternary structure, part of the 30S ribosomal subunit. Contacts proteins S9 and S11.

Functionally, one of the primary rRNA binding proteins, it binds directly to 16S rRNA where it nucleates assembly of the head domain of the 30S subunit. Is located at the subunit interface close to the decoding center, probably blocks exit of the E-site tRNA. This chain is Small ribosomal subunit protein uS7, found in Carboxydothermus hydrogenoformans (strain ATCC BAA-161 / DSM 6008 / Z-2901).